Here is a 410-residue protein sequence, read N- to C-terminus: Phosphoglycerate kinase (410 aa).

Substrate-binding positions include Asp22–Asn24, Arg39, His62–Arg65, Arg119, and Arg159. Residues Glu332 and Gly358–Leu361 each bind ATP.

This sequence belongs to the phosphoglycerate kinase family. As to quaternary structure, homodimer.

The protein resides in the cytoplasm. It catalyses the reaction (2R)-3-phosphoglycerate + ATP = (2R)-3-phospho-glyceroyl phosphate + ADP. It participates in carbohydrate degradation; glycolysis; pyruvate from D-glyceraldehyde 3-phosphate: step 2/5. The chain is Phosphoglycerate kinase (pgk) from Methanothermus fervidus (strain ATCC 43054 / DSM 2088 / JCM 10308 / V24 S).